A 462-amino-acid polypeptide reads, in one-letter code: UDP-N-acetylmuramoylalanine--D-glutamate ligase (462 aa).

117 to 123 (GTNGKTT) is an ATP binding site.

Belongs to the MurCDEF family.

The protein resides in the cytoplasm. The catalysed reaction is UDP-N-acetyl-alpha-D-muramoyl-L-alanine + D-glutamate + ATP = UDP-N-acetyl-alpha-D-muramoyl-L-alanyl-D-glutamate + ADP + phosphate + H(+). It functions in the pathway cell wall biogenesis; peptidoglycan biosynthesis. Cell wall formation. Catalyzes the addition of glutamate to the nucleotide precursor UDP-N-acetylmuramoyl-L-alanine (UMA). The sequence is that of UDP-N-acetylmuramoylalanine--D-glutamate ligase from Synechococcus sp. (strain CC9902).